The chain runs to 233 residues: Large ribosomal subunit protein uL1 (233 aa).

The protein belongs to the universal ribosomal protein uL1 family. As to quaternary structure, part of the 50S ribosomal subunit.

In terms of biological role, binds directly to 23S rRNA. The L1 stalk is quite mobile in the ribosome, and is involved in E site tRNA release. Protein L1 is also a translational repressor protein, it controls the translation of the L11 operon by binding to its mRNA. The sequence is that of Large ribosomal subunit protein uL1 from Thermotoga maritima (strain ATCC 43589 / DSM 3109 / JCM 10099 / NBRC 100826 / MSB8).